Here is a 159-residue protein sequence, read N- to C-terminus: 2-C-methyl-D-erythritol 2,4-cyclodiphosphate synthase (159 aa).

Residues Asp-9 and His-11 each coordinate a divalent metal cation. Residues 9–11 (DVH) and 35–36 (HS) contribute to the 4-CDP-2-C-methyl-D-erythritol 2-phosphate site. His-43 contributes to the a divalent metal cation binding site. 4-CDP-2-C-methyl-D-erythritol 2-phosphate-binding positions include 57 to 59 (DLG), 62 to 66 (FPDTD), 133 to 136 (TTTE), Phe-140, and Arg-143.

Belongs to the IspF family. As to quaternary structure, homotrimer. The cofactor is a divalent metal cation.

It catalyses the reaction 4-CDP-2-C-methyl-D-erythritol 2-phosphate = 2-C-methyl-D-erythritol 2,4-cyclic diphosphate + CMP. The protein operates within isoprenoid biosynthesis; isopentenyl diphosphate biosynthesis via DXP pathway; isopentenyl diphosphate from 1-deoxy-D-xylulose 5-phosphate: step 4/6. Involved in the biosynthesis of isopentenyl diphosphate (IPP) and dimethylallyl diphosphate (DMAPP), two major building blocks of isoprenoid compounds. Catalyzes the conversion of 4-diphosphocytidyl-2-C-methyl-D-erythritol 2-phosphate (CDP-ME2P) to 2-C-methyl-D-erythritol 2,4-cyclodiphosphate (ME-CPP) with a corresponding release of cytidine 5-monophosphate (CMP). The protein is 2-C-methyl-D-erythritol 2,4-cyclodiphosphate synthase of Shouchella clausii (strain KSM-K16) (Alkalihalobacillus clausii).